Consider the following 484-residue polypeptide: Cobyric acid synthase (484 aa).

A GATase cobBQ-type domain is found at 251 to 438 (ALKIAVPVLP…LHGLFASDAY (188 aa)). C333 acts as the Nucleophile in catalysis. The active site involves H430.

Belongs to the CobB/CobQ family. CobQ subfamily.

The protein operates within cofactor biosynthesis; adenosylcobalamin biosynthesis. Its function is as follows. Catalyzes amidations at positions B, D, E, and G on adenosylcobyrinic A,C-diamide. NH(2) groups are provided by glutamine, and one molecule of ATP is hydrogenolyzed for each amidation. The protein is Cobyric acid synthase of Rhizobium etli (strain CIAT 652).